The chain runs to 458 residues: UDP-N-acetylmuramoylalanine--D-glutamate ligase (458 aa).

124-130 (GSDGKTT) is an ATP binding site.

It belongs to the MurCDEF family.

The protein resides in the cytoplasm. It carries out the reaction UDP-N-acetyl-alpha-D-muramoyl-L-alanine + D-glutamate + ATP = UDP-N-acetyl-alpha-D-muramoyl-L-alanyl-D-glutamate + ADP + phosphate + H(+). The protein operates within cell wall biogenesis; peptidoglycan biosynthesis. Functionally, cell wall formation. Catalyzes the addition of glutamate to the nucleotide precursor UDP-N-acetylmuramoyl-L-alanine (UMA). This Clostridium beijerinckii (strain ATCC 51743 / NCIMB 8052) (Clostridium acetobutylicum) protein is UDP-N-acetylmuramoylalanine--D-glutamate ligase.